Here is a 358-residue protein sequence, read N- to C-terminus: Alanine racemase (358 aa).

The active-site Proton acceptor; specific for D-alanine is Lys-35. The residue at position 35 (Lys-35) is an N6-(pyridoxal phosphate)lysine. Arg-130 lines the substrate pocket. Residue Tyr-255 is the Proton acceptor; specific for L-alanine of the active site. Met-303 lines the substrate pocket.

The protein belongs to the alanine racemase family. It depends on pyridoxal 5'-phosphate as a cofactor.

It catalyses the reaction L-alanine = D-alanine. It functions in the pathway amino-acid biosynthesis; D-alanine biosynthesis; D-alanine from L-alanine: step 1/1. Functionally, catalyzes the interconversion of L-alanine and D-alanine. May also act on other amino acids. The polypeptide is Alanine racemase (alr) (Shewanella baltica (strain OS223)).